Reading from the N-terminus, the 637-residue chain is DEAD-box ATP-dependent RNA helicase 37 (637 aa).

Disordered stretches follow at residues 1 to 68 and 86 to 141; these read MRSS…QPSA and GPAS…EEAT. Low complexity-rich tracts occupy residues 10–28 and 46–68; these read ANAEESAPATGAAPTPVAN and GQAPTTTAAPAPAPGPAAVQPSA. Positions 104-116 are enriched in gly residues; sequence GGRGGGGGGGGGW. Residues 174–202 carry the Q motif motif; that stretch reads NTFAEIDLGDALNENIRRCKYVKPTPVQR. The region spanning 205–389 is the Helicase ATP-binding domain; sequence IPISIAGRDL…SDFLADYIFL (185 aa). 218-225 contributes to the ATP binding site; the sequence is AQTGSGKT. A DEAD box motif is present at residues 333–336; sequence DEAD. Residues 416-567 form the Helicase C-terminal domain; sequence YLMDLLHAQK…EVPQWLERYS (152 aa). A disordered region spans residues 570–610; sequence SSFGGGGGRNRRSGGARFGGRDFRRDNRGGGGGGYGGGGGG. The segment covering 588–597 has biased composition (basic and acidic residues); that stretch reads GGRDFRRDNR. Positions 598-610 are enriched in gly residues; it reads GGGGGGYGGGGGG.

Belongs to the DEAD box helicase family. DDX3/DED1 subfamily.

The catalysed reaction is ATP + H2O = ADP + phosphate + H(+). The polypeptide is DEAD-box ATP-dependent RNA helicase 37 (PL10A) (Oryza sativa subsp. japonica (Rice)).